Reading from the N-terminus, the 264-residue chain is Acyl-[acyl-carrier-protein]--UDP-N-acetylglucosamine O-acyltransferase (264 aa).

This sequence belongs to the transferase hexapeptide repeat family. LpxA subfamily. In terms of assembly, homotrimer.

It localises to the cytoplasm. The enzyme catalyses a (3R)-hydroxyacyl-[ACP] + UDP-N-acetyl-alpha-D-glucosamine = a UDP-3-O-[(3R)-3-hydroxyacyl]-N-acetyl-alpha-D-glucosamine + holo-[ACP]. It participates in glycolipid biosynthesis; lipid IV(A) biosynthesis; lipid IV(A) from (3R)-3-hydroxytetradecanoyl-[acyl-carrier-protein] and UDP-N-acetyl-alpha-D-glucosamine: step 1/6. Functionally, involved in the biosynthesis of lipid A, a phosphorylated glycolipid that anchors the lipopolysaccharide to the outer membrane of the cell. The protein is Acyl-[acyl-carrier-protein]--UDP-N-acetylglucosamine O-acyltransferase of Actinobacillus pleuropneumoniae serotype 7 (strain AP76).